Reading from the N-terminus, the 123-residue chain is Large ribosomal subunit protein bL12 (123 aa).

This sequence belongs to the bacterial ribosomal protein bL12 family. In terms of assembly, homodimer. Part of the ribosomal stalk of the 50S ribosomal subunit. Forms a multimeric L10(L12)X complex, where L10 forms an elongated spine to which 2 to 4 L12 dimers bind in a sequential fashion. Binds GTP-bound translation factors.

Functionally, forms part of the ribosomal stalk which helps the ribosome interact with GTP-bound translation factors. Is thus essential for accurate translation. In Borrelia duttonii (strain Ly), this protein is Large ribosomal subunit protein bL12.